A 262-amino-acid chain; its full sequence is 5'-nucleotidase SurE (262 aa).

A divalent metal cation is bound by residues Asp8, Asp9, Ser41, and Asn97.

This sequence belongs to the SurE nucleotidase family. A divalent metal cation is required as a cofactor.

It localises to the cytoplasm. It carries out the reaction a ribonucleoside 5'-phosphate + H2O = a ribonucleoside + phosphate. Nucleotidase that shows phosphatase activity on nucleoside 5'-monophosphates. The polypeptide is 5'-nucleotidase SurE (Methanococcus maripaludis (strain DSM 14266 / JCM 13030 / NBRC 101832 / S2 / LL)).